Reading from the N-terminus, the 182-residue chain is Ribosome maturation factor RimM (182 aa).

Positions 99-176 (DDEYYHADLI…ELPAEIEGDT (78 aa)) constitute a PRC barrel domain.

Belongs to the RimM family. In terms of assembly, binds ribosomal protein uS19.

Its subcellular location is the cytoplasm. Functionally, an accessory protein needed during the final step in the assembly of 30S ribosomal subunit, possibly for assembly of the head region. Essential for efficient processing of 16S rRNA. May be needed both before and after RbfA during the maturation of 16S rRNA. It has affinity for free ribosomal 30S subunits but not for 70S ribosomes. The polypeptide is Ribosome maturation factor RimM (Rhodopseudomonas palustris (strain HaA2)).